A 132-amino-acid chain; its full sequence is MALTLDIVTPEKRVLSVQVDEVRAPGVQGGFGVRLNHEPFMTALEPGRLTYVEGGREHHYAVGGGFLQVADNRVIVLADTAEAAGEIDVDRARKAFEDAQNRLLQLTEQDESHQAESARVRRAAARLTVAGR.

This sequence belongs to the ATPase epsilon chain family. As to quaternary structure, F-type ATPases have 2 components, CF(1) - the catalytic core - and CF(0) - the membrane proton channel. CF(1) has five subunits: alpha(3), beta(3), gamma(1), delta(1), epsilon(1). CF(0) has three main subunits: a, b and c.

The protein resides in the cell inner membrane. In terms of biological role, produces ATP from ADP in the presence of a proton gradient across the membrane. The sequence is that of ATP synthase epsilon chain from Anaeromyxobacter sp. (strain K).